The sequence spans 382 residues: Queuine tRNA-ribosyltransferase (382 aa).

The Proton acceptor role is filled by aspartate 93. Substrate is bound by residues 93-97 (DSGGF), aspartate 147, glutamine 191, and glycine 218. Residues 249 to 255 (GVGKPED) form an RNA binding region. Residue aspartate 268 is the Nucleophile of the active site. Residues 273–277 (TRNAR) are RNA binding; important for wobble base 34 recognition. The Zn(2+) site is built by cysteine 306, cysteine 308, cysteine 311, and histidine 337.

Belongs to the queuine tRNA-ribosyltransferase family. As to quaternary structure, homodimer. Within each dimer, one monomer is responsible for RNA recognition and catalysis, while the other monomer binds to the replacement base PreQ1. Zn(2+) is required as a cofactor.

The catalysed reaction is 7-aminomethyl-7-carbaguanine + guanosine(34) in tRNA = 7-aminomethyl-7-carbaguanosine(34) in tRNA + guanine. It participates in tRNA modification; tRNA-queuosine biosynthesis. In terms of biological role, catalyzes the base-exchange of a guanine (G) residue with the queuine precursor 7-aminomethyl-7-deazaguanine (PreQ1) at position 34 (anticodon wobble position) in tRNAs with GU(N) anticodons (tRNA-Asp, -Asn, -His and -Tyr). Catalysis occurs through a double-displacement mechanism. The nucleophile active site attacks the C1' of nucleotide 34 to detach the guanine base from the RNA, forming a covalent enzyme-RNA intermediate. The proton acceptor active site deprotonates the incoming PreQ1, allowing a nucleophilic attack on the C1' of the ribose to form the product. After dissociation, two additional enzymatic reactions on the tRNA convert PreQ1 to queuine (Q), resulting in the hypermodified nucleoside queuosine (7-(((4,5-cis-dihydroxy-2-cyclopenten-1-yl)amino)methyl)-7-deazaguanosine). The sequence is that of Queuine tRNA-ribosyltransferase from Actinobacillus pleuropneumoniae serotype 3 (strain JL03).